Here is a 326-residue protein sequence, read N- to C-terminus: Putative HTH-type transcriptional regulator y4qH (326 aa).

The HTH luxR-type domain occupies 257–322 (AVQKIPALSL…VAAIKAISLG (66 aa)). A DNA-binding region (H-T-H motif) is located at residues 281–300 (SWDIGVIMRISENTVNFHIK).

The protein belongs to the autoinducer-regulated transcriptional regulatory protein family.

This is Putative HTH-type transcriptional regulator y4qH from Sinorhizobium fredii (strain NBRC 101917 / NGR234).